A 275-amino-acid chain; its full sequence is 4-deoxy-L-threo-5-hexosulose-uronate ketol-isomerase (275 aa).

Positions 193, 195, 200, and 242 each coordinate Zn(2+).

Belongs to the KduI family. It depends on Zn(2+) as a cofactor.

The catalysed reaction is 5-dehydro-4-deoxy-D-glucuronate = 3-deoxy-D-glycero-2,5-hexodiulosonate. The protein operates within glycan metabolism; pectin degradation; 2-dehydro-3-deoxy-D-gluconate from pectin: step 4/5. Functionally, catalyzes the isomerization of 5-dehydro-4-deoxy-D-glucuronate to 3-deoxy-D-glycero-2,5-hexodiulosonate. The sequence is that of 4-deoxy-L-threo-5-hexosulose-uronate ketol-isomerase from Bacillus licheniformis (strain ATCC 14580 / DSM 13 / JCM 2505 / CCUG 7422 / NBRC 12200 / NCIMB 9375 / NCTC 10341 / NRRL NRS-1264 / Gibson 46).